The chain runs to 71 residues: Small ribosomal subunit protein bS21 (71 aa).

It belongs to the bacterial ribosomal protein bS21 family.

This chain is Small ribosomal subunit protein bS21, found in Hydrogenovibrio crunogenus (strain DSM 25203 / XCL-2) (Thiomicrospira crunogena).